The chain runs to 597 residues: Elongation factor 4 (597 aa).

Positions 2-184 (DHIRNFSIIA…SLIAKVPPPK (183 aa)) constitute a tr-type G domain. Residues 14–19 (DHGKST) and 131–134 (NKID) each bind GTP.

The protein belongs to the TRAFAC class translation factor GTPase superfamily. Classic translation factor GTPase family. LepA subfamily.

The protein resides in the cell inner membrane. It catalyses the reaction GTP + H2O = GDP + phosphate + H(+). Required for accurate and efficient protein synthesis under certain stress conditions. May act as a fidelity factor of the translation reaction, by catalyzing a one-codon backward translocation of tRNAs on improperly translocated ribosomes. Back-translocation proceeds from a post-translocation (POST) complex to a pre-translocation (PRE) complex, thus giving elongation factor G a second chance to translocate the tRNAs correctly. Binds to ribosomes in a GTP-dependent manner. This Burkholderia pseudomallei (strain 1710b) protein is Elongation factor 4.